A 393-amino-acid chain; its full sequence is Arginine biosynthesis bifunctional protein ArgJ (393 aa).

Positions 142, 168, 179, 265, 388, and 393 each coordinate substrate. Thr-179 serves as the catalytic Nucleophile.

It belongs to the ArgJ family. Heterotetramer of two alpha and two beta chains.

It is found in the cytoplasm. The catalysed reaction is N(2)-acetyl-L-ornithine + L-glutamate = N-acetyl-L-glutamate + L-ornithine. The enzyme catalyses L-glutamate + acetyl-CoA = N-acetyl-L-glutamate + CoA + H(+). The protein operates within amino-acid biosynthesis; L-arginine biosynthesis; L-ornithine and N-acetyl-L-glutamate from L-glutamate and N(2)-acetyl-L-ornithine (cyclic): step 1/1. It participates in amino-acid biosynthesis; L-arginine biosynthesis; N(2)-acetyl-L-ornithine from L-glutamate: step 1/4. Catalyzes two activities which are involved in the cyclic version of arginine biosynthesis: the synthesis of N-acetylglutamate from glutamate and acetyl-CoA as the acetyl donor, and of ornithine by transacetylation between N(2)-acetylornithine and glutamate. The polypeptide is Arginine biosynthesis bifunctional protein ArgJ (Desulfotalea psychrophila (strain LSv54 / DSM 12343)).